Consider the following 451-residue polypeptide: Trigger factor (451 aa).

Residues 165–250 enclose the PPIase FKBP-type domain; it reads DDKLTIDFEG…LRQIQAREAL (86 aa).

Belongs to the FKBP-type PPIase family. Tig subfamily.

It localises to the cytoplasm. It catalyses the reaction [protein]-peptidylproline (omega=180) = [protein]-peptidylproline (omega=0). Involved in protein export. Acts as a chaperone by maintaining the newly synthesized protein in an open conformation. Functions as a peptidyl-prolyl cis-trans isomerase. The sequence is that of Trigger factor from Helicobacter pylori (strain Shi470).